Here is a 63-residue protein sequence, read N- to C-terminus: Large ribosomal subunit protein uL29 (63 aa).

This sequence belongs to the universal ribosomal protein uL29 family.

This chain is Large ribosomal subunit protein uL29, found in Salmonella agona (strain SL483).